The following is a 169-amino-acid chain: Phosphopantetheine adenylyltransferase (169 aa).

Ser10 lines the substrate pocket. ATP-binding positions include 10-11 (SF) and His18. Substrate is bound by residues Lys42, Thr79, and Arg93. Residues 94–96 (GLR), Glu104, and 129–135 (VRPITAT) contribute to the ATP site.

This sequence belongs to the bacterial CoaD family. As to quaternary structure, homohexamer. The cofactor is Mg(2+).

The protein resides in the cytoplasm. The catalysed reaction is (R)-4'-phosphopantetheine + ATP + H(+) = 3'-dephospho-CoA + diphosphate. It participates in cofactor biosynthesis; coenzyme A biosynthesis; CoA from (R)-pantothenate: step 4/5. In terms of biological role, reversibly transfers an adenylyl group from ATP to 4'-phosphopantetheine, yielding dephospho-CoA (dPCoA) and pyrophosphate. The protein is Phosphopantetheine adenylyltransferase of Rhodopseudomonas palustris (strain TIE-1).